The sequence spans 78 residues: Acyl carrier protein (78 aa).

The region spanning 1-76 (MALFEDIQAV…DVVKYIEDNK (76 aa)) is the Carrier domain. Position 36 is an O-(pantetheine 4'-phosphoryl)serine (Ser-36).

It belongs to the acyl carrier protein (ACP) family. 4'-phosphopantetheine is transferred from CoA to a specific serine of apo-ACP by AcpS. This modification is essential for activity because fatty acids are bound in thioester linkage to the sulfhydryl of the prosthetic group.

It is found in the cytoplasm. It functions in the pathway lipid metabolism; fatty acid biosynthesis. Its function is as follows. Carrier of the growing fatty acid chain in fatty acid biosynthesis. This Helicobacter pylori (strain G27) protein is Acyl carrier protein.